A 165-amino-acid chain; its full sequence is Protein SprT (165 aa).

The region spanning 22–163 (LAQANLKLDR…RCVHCGEPLV (142 aa)) is the SprT-like domain. His78 contributes to the Zn(2+) binding site. Residue Glu79 is part of the active site. His82 serves as a coordination point for Zn(2+).

This sequence belongs to the SprT family. Requires Zn(2+) as cofactor.

It localises to the cytoplasm. This Salmonella agona (strain SL483) protein is Protein SprT.